Reading from the N-terminus, the 359-residue chain is Alanine racemase, biosynthetic (359 aa).

Catalysis depends on K34, which acts as the Proton acceptor; specific for D-alanine. N6-(pyridoxal phosphate)lysine is present on K34. Position 129 (R129) interacts with substrate. The active-site Proton acceptor; specific for L-alanine is Y255. M303 contacts substrate.

This sequence belongs to the alanine racemase family. It depends on pyridoxal 5'-phosphate as a cofactor.

It catalyses the reaction L-alanine = D-alanine. It participates in amino-acid biosynthesis; D-alanine biosynthesis; D-alanine from L-alanine: step 1/1. Its pathway is cell wall biogenesis; peptidoglycan biosynthesis. In terms of biological role, catalyzes the interconversion of L-alanine and D-alanine. Provides the D-alanine required for cell wall biosynthesis. The chain is Alanine racemase, biosynthetic (alr) from Salmonella typhi.